Consider the following 160-residue polypeptide: Siroheme decarboxylase NirH subunit (160 aa).

This sequence belongs to the Ahb/Nir family. In terms of assembly, forms a complex composed of NirDL, NirG and NirH. All proteins are required for the total conversion of siroheme to didecarboxysiroheme.

It catalyses the reaction siroheme + 2 H(+) = 12,18-didecarboxysiroheme + 2 CO2. The protein operates within porphyrin-containing compound metabolism. In terms of biological role, involved in heme d1 biosynthesis. Catalyzes the decarboxylation of siroheme into didecarboxysiroheme. Siroheme is probably decarboxylated to monodecarboxysiroheme, which is in turn decarboxylated to didecarboxysiroheme. The chain is Siroheme decarboxylase NirH subunit from Paracoccus pantotrophus (Thiosphaera pantotropha).